Consider the following 379-residue polypeptide: UDP-4-amino-4-deoxy-L-arabinose--oxoglutarate aminotransferase (379 aa).

Lys-182 is modified (N6-(pyridoxal phosphate)lysine).

The protein belongs to the DegT/DnrJ/EryC1 family. ArnB subfamily. In terms of assembly, homodimer. The cofactor is pyridoxal 5'-phosphate.

It carries out the reaction UDP-4-amino-4-deoxy-beta-L-arabinose + 2-oxoglutarate = UDP-beta-L-threo-pentopyranos-4-ulose + L-glutamate. The protein operates within nucleotide-sugar biosynthesis; UDP-4-deoxy-4-formamido-beta-L-arabinose biosynthesis; UDP-4-deoxy-4-formamido-beta-L-arabinose from UDP-alpha-D-glucuronate: step 2/3. It participates in bacterial outer membrane biogenesis; lipopolysaccharide biosynthesis. Its function is as follows. Catalyzes the conversion of UDP-4-keto-arabinose (UDP-Ara4O) to UDP-4-amino-4-deoxy-L-arabinose (UDP-L-Ara4N). The modified arabinose is attached to lipid A and is required for resistance to polymyxin and cationic antimicrobial peptides. The sequence is that of UDP-4-amino-4-deoxy-L-arabinose--oxoglutarate aminotransferase from Salmonella choleraesuis (strain SC-B67).